We begin with the raw amino-acid sequence, 181 residues long: ATP-dependent protease subunit HslV (181 aa).

T7 is a catalytic residue. Positions 166, 169, and 172 each coordinate Na(+).

This sequence belongs to the peptidase T1B family. HslV subfamily. In terms of assembly, a double ring-shaped homohexamer of HslV is capped on each side by a ring-shaped HslU homohexamer. The assembly of the HslU/HslV complex is dependent on binding of ATP.

The protein localises to the cytoplasm. The enzyme catalyses ATP-dependent cleavage of peptide bonds with broad specificity.. Its activity is regulated as follows. Allosterically activated by HslU binding. Protease subunit of a proteasome-like degradation complex believed to be a general protein degrading machinery. The polypeptide is ATP-dependent protease subunit HslV (Anaeromyxobacter sp. (strain Fw109-5)).